The primary structure comprises 321 residues: Cytochrome c biogenesis protein CcsA (321 aa).

8 consecutive transmembrane segments (helical) span residues 17–37 (VVSI…FVGL), 48–68 (TFFC…HLPI), 71–91 (LYES…VPYF), 98–118 (LSTI…WGLL), 143–163 (MVSG…LLVI), 225–245 (ILSI…VWAN), 259–273 (TWAF…IYFH), and 286–306 (AIVA…VNLL).

Belongs to the CcmF/CycK/Ccl1/NrfE/CcsA family. In terms of assembly, may interact with Ccs1.

The protein localises to the plastid. It is found in the chloroplast thylakoid membrane. In terms of biological role, required during biogenesis of c-type cytochromes (cytochrome c6 and cytochrome f) at the step of heme attachment. The chain is Cytochrome c biogenesis protein CcsA from Populus alba (White poplar).